The following is a 206-amino-acid chain: HTH-type transcriptional regulator BetI (206 aa).

In terms of domain architecture, HTH tetR-type spans 8–68 (PLRRKALVDA…ETIRSLLRDL (61 aa)). Residues 31–50 (TMSDIAREAGVSAALAHHYF) constitute a DNA-binding region (H-T-H motif).

Its pathway is amine and polyamine biosynthesis; betaine biosynthesis via choline pathway [regulation]. In terms of biological role, repressor involved in the biosynthesis of the osmoprotectant glycine betaine. It represses transcription of the choline transporter BetT and the genes of BetAB involved in the synthesis of glycine betaine. The polypeptide is HTH-type transcriptional regulator BetI (Agrobacterium fabrum (strain C58 / ATCC 33970) (Agrobacterium tumefaciens (strain C58))).